A 447-amino-acid chain; its full sequence is uncharacterized protein (447 aa).

The protein localises to the mitochondrion. This is an uncharacterized protein from Dictyostelium discoideum (Social amoeba).